A 328-amino-acid chain; its full sequence is WUSCHEL-related homeobox 6 (328 aa).

A compositionally biased stretch (polar residues) spans 1 to 11 (MEGSSNSPDRQ). Positions 1–45 (MEGSSNSPDRQSSGGSPPEERGGGGSGGGGGRSAAGEPVRSRWTP) are disordered. Over residues 23-33 (GGGSGGGGGRS) the composition is skewed to gly residues. A DNA-binding region (homeobox; WUS-type) is located at residues 38–102 (PVRSRWTPKP…NRRSRSRRRQ (65 aa)).

It belongs to the WUS homeobox family.

Its subcellular location is the nucleus. Its function is as follows. Transcription factor which may be involved in developmental processes. The protein is WUSCHEL-related homeobox 6 (WOX6) of Oryza sativa subsp. indica (Rice).